The sequence spans 778 residues: Degenerin deg-1 (778 aa).

Topologically, residues 1 to 82 are cytoplasmic; sequence MSNHHSKTKK…IARNSFSKLM (82 aa). A helical transmembrane segment spans residues 83 to 103; sequence WGLIIFSFLLMFAYQASKLIF. The Extracellular portion of the chain corresponds to 104–711; the sequence is KFSAHEKITD…LVNLIADFGG (608 aa). The span at 154–165 shows a compositional bias: basic and acidic residues; sequence NAKTHSKSEGEK. Disordered stretches follow at residues 154–180 and 201–220; these read NAKT…DASQ and SNKT…QRSI. Asn-202, Asn-209, Asn-272, and Asn-342 each carry an N-linked (GlcNAc...) asparagine glycan. Low complexity predominate over residues 346–369; it reads TSTTTTTTTTPPPTTTSTTTTTTT. The interval 346–380 is disordered; sequence TSTTTTTTTTPPPTTTSTTTTTTTTPPPTTTARPN. Asn-473, Asn-492, and Asn-606 each carry an N-linked (GlcNAc...) asparagine glycan. The chain crosses the membrane as a helical span at residues 712 to 732; the sequence is HLGLWLGFSVITVMEVCVLLV. Topologically, residues 733–778 are cytoplasmic; that stretch reads DMISLFFKSRHEEKLLRQSTKRKDVPEDKRQITVGSGRKSDAFVSI.

Belongs to the amiloride-sensitive sodium channel (TC 1.A.6) family.

The protein resides in the membrane. Its function is as follows. Probable sodium channel subunit. Required by a subset of neurons. In Caenorhabditis elegans, this protein is Degenerin deg-1.